The primary structure comprises 154 residues: Myoglobin (154 aa).

Residues 2–148 (GLSDGEWQLV…FRKDIAAKYK (147 aa)) form the Globin domain. The residue at position 4 (Ser-4) is a Phosphoserine. Residue His-65 participates in nitrite binding. His-65 provides a ligand contact to O2. A Phosphothreonine modification is found at Thr-68. His-94 contacts heme b.

Belongs to the globin family. In terms of assembly, monomeric.

It localises to the cytoplasm. It is found in the sarcoplasm. It carries out the reaction Fe(III)-heme b-[protein] + nitric oxide + H2O = Fe(II)-heme b-[protein] + nitrite + 2 H(+). The catalysed reaction is H2O2 + AH2 = A + 2 H2O. Its function is as follows. Monomeric heme protein which primary function is to store oxygen and facilitate its diffusion within muscle tissues. Reversibly binds oxygen through a pentacoordinated heme iron and enables its timely and efficient release as needed during periods of heightened demand. Depending on the oxidative conditions of tissues and cells, and in addition to its ability to bind oxygen, it also has a nitrite reductase activity whereby it regulates the production of bioactive nitric oxide. Under stress conditions, like hypoxia and anoxia, it also protects cells against reactive oxygen species thanks to its pseudoperoxidase activity. This chain is Myoglobin (MB), found in Castor fiber (Eurasian beaver).